Here is a 251-residue protein sequence, read N- to C-terminus: 5'-nucleotidase SurE 1 (251 aa).

Asp8, Asp9, Ser39, and Asn95 together coordinate a divalent metal cation.

Belongs to the SurE nucleotidase family. Requires a divalent metal cation as cofactor.

The protein localises to the cytoplasm. It carries out the reaction a ribonucleoside 5'-phosphate + H2O = a ribonucleoside + phosphate. In terms of biological role, nucleotidase that shows phosphatase activity on nucleoside 5'-monophosphates. This Thermus thermophilus (strain ATCC BAA-163 / DSM 7039 / HB27) protein is 5'-nucleotidase SurE 1.